Reading from the N-terminus, the 182-residue chain is Large ribosomal subunit protein uL5 (182 aa).

It belongs to the universal ribosomal protein uL5 family. In terms of assembly, part of the 50S ribosomal subunit; part of the 5S rRNA/L5/L18/L25 subcomplex. Contacts the 5S rRNA and the P site tRNA. Forms a bridge to the 30S subunit in the 70S ribosome.

Its function is as follows. This is one of the proteins that bind and probably mediate the attachment of the 5S RNA into the large ribosomal subunit, where it forms part of the central protuberance. In the 70S ribosome it contacts protein S13 of the 30S subunit (bridge B1b), connecting the 2 subunits; this bridge is implicated in subunit movement. Contacts the P site tRNA; the 5S rRNA and some of its associated proteins might help stabilize positioning of ribosome-bound tRNAs. In Trichormus variabilis (strain ATCC 29413 / PCC 7937) (Anabaena variabilis), this protein is Large ribosomal subunit protein uL5.